Consider the following 520-residue polypeptide: Bifunctional purine biosynthesis protein PurH (520 aa).

Positions 1–147 (MAKIGRALIS…KNNRDVTVVV (147 aa)) constitute an MGS-like domain.

Belongs to the PurH family.

It carries out the reaction (6R)-10-formyltetrahydrofolate + 5-amino-1-(5-phospho-beta-D-ribosyl)imidazole-4-carboxamide = 5-formamido-1-(5-phospho-D-ribosyl)imidazole-4-carboxamide + (6S)-5,6,7,8-tetrahydrofolate. The enzyme catalyses IMP + H2O = 5-formamido-1-(5-phospho-D-ribosyl)imidazole-4-carboxamide. Its pathway is purine metabolism; IMP biosynthesis via de novo pathway; 5-formamido-1-(5-phospho-D-ribosyl)imidazole-4-carboxamide from 5-amino-1-(5-phospho-D-ribosyl)imidazole-4-carboxamide (10-formyl THF route): step 1/1. The protein operates within purine metabolism; IMP biosynthesis via de novo pathway; IMP from 5-formamido-1-(5-phospho-D-ribosyl)imidazole-4-carboxamide: step 1/1. This Geobacter sp. (strain M21) protein is Bifunctional purine biosynthesis protein PurH.